Here is a 415-residue protein sequence, read N- to C-terminus: Homoserine O-succinyltransferase (415 aa).

An AB hydrolase-1 domain is found at 69–383; the sequence is NAVLVCHALN…PHGHDAFLLD (315 aa). The Nucleophile role is filled by Ser175. Residue Arg245 coordinates substrate. Active-site residues include Asp344 and His377. Asp378 contacts substrate.

This sequence belongs to the AB hydrolase superfamily. MetX family. As to quaternary structure, homodimer.

It is found in the cytoplasm. It catalyses the reaction L-homoserine + succinyl-CoA = O-succinyl-L-homoserine + CoA. The protein operates within amino-acid biosynthesis; L-methionine biosynthesis via de novo pathway; O-succinyl-L-homoserine from L-homoserine: step 1/1. Functionally, transfers a succinyl group from succinyl-CoA to L-homoserine, forming succinyl-L-homoserine. The polypeptide is Homoserine O-succinyltransferase (Bordetella pertussis (strain Tohama I / ATCC BAA-589 / NCTC 13251)).